The primary structure comprises 306 residues: MVGTTATDVAPTMGVKIFSAGVAACLADVITFPLDTAKVRLQIQGECQTTSGIRYKGVLGTITTLAKTEGPLKLYSGLPAGLQRQISFASLRIGLYDTVQEFWGGEEATPSLRSKICAGLTTGGVAVFIGQPTEVVKVRLQAQSHLHGLKPRYTGTYNAYRIIATTESLSTLWKGTTPNLLRNIIINCTELVTYDLMKGALVRNDILADDVPCHLLSALIAGFCTTLLSSPVDVVKTRFINSPQGQYTSVPSCAMSMLTKEGPTAFFKGFAPSFLRLASWNVIMFVCFEKLKRELMKSRQTVDCAT.

Over Met-1–Ala-10 the chain is Mitochondrial intermembrane. Residues Pro-11–Phe-32 traverse the membrane as a helical segment. Solcar repeat units follow at residues Pro-11 to Phe-102, Pro-110 to Ala-200, and Asp-209 to Glu-294. The Mitochondrial matrix portion of the chain corresponds to Pro-33–Lys-73. Lys-56 serves as a coordination point for fatty acid 16:0. The helical transmembrane segment at Leu-74–Tyr-96 threads the bilayer. Topologically, residues Asp-97–Lys-115 are mitochondrial intermembrane. Residues Ile-116–Pro-132 traverse the membrane as a helical segment. At Thr-133–Thr-177 the chain is on the mitochondrial matrix side. The chain crosses the membrane as a helical span at residues Pro-178–Tyr-194. Topologically, residues Asp-195–Val-211 are mitochondrial intermembrane. Residues Pro-212–Pro-231 traverse the membrane as a helical segment. The Mitochondrial matrix portion of the chain corresponds to Val-232–Ala-265. Cys-253 carries the cysteine sulfenic acid (-SOH) modification. A helical membrane pass occupies residues Phe-266–Phe-288. Residue Lys-268 coordinates fatty acid 16:0. Over Glu-289 to Thr-306 the chain is Mitochondrial intermembrane.

Belongs to the mitochondrial carrier (TC 2.A.29) family. As to quaternary structure, most probably functions as a monomer. Binds one purine nucleotide per monomer. However, has also been suggested to function as a homodimer or a homotetramer. Tightly associates with cardiolipin in the mitochondrion inner membrane; may stabilize and regulate its activity. In terms of processing, may undergo sulfenylation upon cold exposure. May increase the sensitivity of UCP1 thermogenic function to the activation by noradrenaline probably through structural effects. May undergo ubiquitin-mediated proteasomal degradation.

The protein resides in the mitochondrion inner membrane. It carries out the reaction H(+)(in) = H(+)(out). Its activity is regulated as follows. Has no constitutive proton transporter activity and has to be activated by long-chain fatty acids/LCFAs. Inhibited by purine nucleotides. Both purine nucleotides and LCFAs bind the cytosolic side of the transporter and directly compete to activate or inhibit it. Activated by noradrenaline and reactive oxygen species. Despite lacking canonical translational encoding for selenocysteine, a small pool of the protein has been observed to selectively incorporate selenocysteine at 'Cys-253'. Selenocysteine-modified protein is highly sensitive to redox modification and may constitute a pool of protein highly sensitive to activation by elevated levels of reactive oxygen species (ROS). In terms of biological role, mitochondrial protein responsible for thermogenic respiration, a specialized capacity of brown adipose tissue and beige fat that participates in non-shivering adaptive thermogenesis to temperature and diet variations and more generally to the regulation of energy balance. Functions as a long-chain fatty acid/LCFA and proton symporter, simultaneously transporting one LCFA and one proton through the inner mitochondrial membrane. However, LCFAs remaining associated with the transporter via their hydrophobic tails, it results in an apparent transport of protons activated by LCFAs. Thereby, dissipates the mitochondrial proton gradient and converts the energy of substrate oxydation into heat instead of ATP. Regulates the production of reactive oxygen species/ROS by mitochondria. In Ochotona dauurica (Daurian pika), this protein is Mitochondrial brown fat uncoupling protein 1.